We begin with the raw amino-acid sequence, 432 residues long: Adenylosuccinate synthetase (432 aa).

GTP is bound by residues Gly13–Lys19 and Gly41–Thr43. Asp14 functions as the Proton acceptor in the catalytic mechanism. 2 residues coordinate Mg(2+): Asp14 and Gly41. IMP-binding positions include Asp14–Lys17, Asn39–His42, Thr130, Arg144, Gln225, Thr240, and Arg304. His42 (proton donor) is an active-site residue. Residue Ala300–Arg306 coordinates substrate. GTP is bound by residues Arg306, Lys332 to Asp334, and Ser415 to Gly417.

It belongs to the adenylosuccinate synthetase family. Homodimer. Requires Mg(2+) as cofactor.

It localises to the cytoplasm. It carries out the reaction IMP + L-aspartate + GTP = N(6)-(1,2-dicarboxyethyl)-AMP + GDP + phosphate + 2 H(+). Its pathway is purine metabolism; AMP biosynthesis via de novo pathway; AMP from IMP: step 1/2. Its function is as follows. Plays an important role in the de novo pathway of purine nucleotide biosynthesis. Catalyzes the first committed step in the biosynthesis of AMP from IMP. The polypeptide is Adenylosuccinate synthetase (Hahella chejuensis (strain KCTC 2396)).